A 352-amino-acid polypeptide reads, in one-letter code: Ubiquitin thioesterase otulin (352 aa).

The disordered stretch occupies residues 1-49 (MSRGTMPQPGAWPGASCAETPAREAGAAARDGGKVTAGAQPRAATRCPA). Over residues 18-30 (AETPAREAGAAAR) the composition is skewed to low complexity. The stretch at 49–73 (AEHEEDMYRAADEIEKEKELLIHER) forms a coiled coil. A PIM motif motif is present at residues 52-57 (EEDMYR). A Phosphotyrosine modification is found at Tyr-56. 2 linear diubiquitin binding regions span residues 95–96 (EW) and 124–126 (RGD). The OTU domain maps to 118–346 (TSIRRVRGDN…DRHYNIPVRV (229 aa)). Asp-126 is a catalytic residue. Cys-129 acts as the Nucleophile in catalysis. Linear diubiquitin binding regions lie at residues 255–259 (FFSVL), 283–289 (TGGLEQV), and 336–338 (DDR). Residue His-339 is part of the active site. Residues 349–352 (ETSV) carry the PDZ-binding motif.

This sequence belongs to the peptidase C65 family. Otulin subfamily. Interacts (via the PUB domain) with RNF31 (via the PIM motif); the interaction is direct. Interacts with DVL2. Ubiquitinated. In terms of processing, acetylated. Post-translationally, phosphorylated. Phosphorylation at Tyr-56 prevents interaction with RNF31; dephosphorylation promotes interaction with RNF31 and the LUBAC complex.

It localises to the cytoplasm. The catalysed reaction is Thiol-dependent hydrolysis of ester, thioester, amide, peptide and isopeptide bonds formed by the C-terminal Gly of ubiquitin (a 76-residue protein attached to proteins as an intracellular targeting signal).. Its function is as follows. Deubiquitinase that specifically removes linear ('Met-1'-linked) polyubiquitin chains to substrates and acts as a regulator of angiogenesis and innate immune response. Required during angiogenesis, craniofacial and neuronal development by regulating the canonical Wnt signaling together with the LUBAC complex. Acts as a negative regulator of NF-kappa-B by regulating the activity of the LUBAC complex. OTULIN function is mainly restricted to homeostasis of the LUBAC complex: acts by removing 'Met-1'-linked autoubiquitination of the LUBAC complex, thereby preventing inactivation of the LUBAC complex. Acts as a key negative regulator of inflammation by restricting spontaneous inflammation and maintaining immune homeostasis. In myeloid cell, required to prevent unwarranted secretion of cytokines leading to inflammation and autoimmunity by restricting linear polyubiquitin formation. Plays a role in innate immune response by restricting linear polyubiquitin formation on LUBAC complex in response to NOD2 stimulation, probably to limit NOD2-dependent pro-inflammatory signaling. The polypeptide is Ubiquitin thioesterase otulin (Mus musculus (Mouse)).